The following is a 503-amino-acid chain: Glutamate--tRNA ligase (503 aa).

A 'HIGH' region motif is present at residues 12–22; sequence PSPTGYLHVGG. A 'KMSKS' region motif is present at residues 259-263; it reads KLSKR. Lysine 262 lines the ATP pocket.

This sequence belongs to the class-I aminoacyl-tRNA synthetase family. Glutamate--tRNA ligase type 1 subfamily. Monomer.

Its subcellular location is the cytoplasm. It carries out the reaction tRNA(Glu) + L-glutamate + ATP = L-glutamyl-tRNA(Glu) + AMP + diphosphate. Catalyzes the attachment of glutamate to tRNA(Glu) in a two-step reaction: glutamate is first activated by ATP to form Glu-AMP and then transferred to the acceptor end of tRNA(Glu). The protein is Glutamate--tRNA ligase of Chloroherpeton thalassium (strain ATCC 35110 / GB-78).